The following is a 138-amino-acid chain: ATP synthase epsilon chain (138 aa).

It belongs to the ATPase epsilon chain family. As to quaternary structure, F-type ATPases have 2 components, CF(1) - the catalytic core - and CF(0) - the membrane proton channel. CF(1) has five subunits: alpha(3), beta(3), gamma(1), delta(1), epsilon(1). CF(0) has three main subunits: a, b and c.

The protein resides in the cell inner membrane. In terms of biological role, produces ATP from ADP in the presence of a proton gradient across the membrane. The protein is ATP synthase epsilon chain of Bartonella quintana (strain Toulouse) (Rochalimaea quintana).